The sequence spans 192 residues: Guanylate kinase (192 aa).

The Guanylate kinase-like domain occupies 7–185; the sequence is GLIIILSSPS…TLKKIHEIIV (179 aa). Position 14-21 (14-21) interacts with ATP; it reads SPSGTGKS.

This sequence belongs to the guanylate kinase family.

The protein localises to the cytoplasm. It catalyses the reaction GMP + ATP = GDP + ADP. Essential for recycling GMP and indirectly, cGMP. This is Guanylate kinase from Rickettsia felis (strain ATCC VR-1525 / URRWXCal2) (Rickettsia azadi).